A 541-amino-acid chain; its full sequence is Carboxypeptidase Y homolog A (541 aa).

A signal peptide spans 1 to 17; that stretch reads MKTFTAALLVGTALAAV. A propeptide spanning residues 18-122 is cleaved from the precursor; that stretch reads PQQQPLQTQV…KLENYDLRVK (105 aa). 5 cysteine pairs are disulfide-bonded: Cys-177-Cys-416, Cys-311-Cys-325, Cys-335-Cys-358, Cys-342-Cys-351, and Cys-380-Cys-386. A glycan (N-linked (GlcNAc...) asparagine) is linked at Asn-208. Ser-264 is a catalytic residue. Asp-455 is a catalytic residue. Residues Asn-485, Asn-491, and Asn-506 are each glycosylated (N-linked (GlcNAc...) asparagine). His-517 is a catalytic residue.

Belongs to the peptidase S10 family.

The protein localises to the vacuole. It carries out the reaction Release of a C-terminal amino acid with broad specificity.. Vacuolar carboxypeptidase involved in degradation of small peptides. Digests preferentially peptides containing an aliphatic or hydrophobic residue in P1' position, as well as methionine, leucine or phenylalanine in P1 position of ester substrate. In Uncinocarpus reesii (strain UAMH 1704), this protein is Carboxypeptidase Y homolog A (cpyA).